Consider the following 315-residue polypeptide: Tetraacyldisaccharide 4'-kinase (315 aa).

Residue 52–59 participates in ATP binding; the sequence is TVGGTGKT.

It belongs to the LpxK family.

It carries out the reaction a lipid A disaccharide + ATP = a lipid IVA + ADP + H(+). Its pathway is glycolipid biosynthesis; lipid IV(A) biosynthesis; lipid IV(A) from (3R)-3-hydroxytetradecanoyl-[acyl-carrier-protein] and UDP-N-acetyl-alpha-D-glucosamine: step 6/6. In terms of biological role, transfers the gamma-phosphate of ATP to the 4'-position of a tetraacyldisaccharide 1-phosphate intermediate (termed DS-1-P) to form tetraacyldisaccharide 1,4'-bis-phosphate (lipid IVA). The polypeptide is Tetraacyldisaccharide 4'-kinase (Ruthia magnifica subsp. Calyptogena magnifica).